We begin with the raw amino-acid sequence, 2053 residues long: Integrator complex subunit 1 (2053 aa).

2 disordered regions span residues 36–58 and 249–285; these read KILP…ALAS and SLPS…ESEP. The span at 268-283 shows a compositional bias: polar residues; sequence DNSTQSLDASPLNTES. The chain crosses the membrane as a helical span at residues 708 to 728; it reads LAIIAFYWKAWLILLMISAHN.

It belongs to the Integrator subunit 1 family. Belongs to the multiprotein complex Integrator, at least composed of IntS1, IntS2, IntS3, IntS4, omd/IntS5, IntS6, defl/IntS7, IntS8, IntS9, IntS10, IntS11, IntS12, asun/IntS13, IntS14 and IntS15. The core complex associates with protein phosphatase 2A subunits mts/PP2A and Pp2A-29B, to form the Integrator-PP2A (INTAC) complex. Within the complex, interacts with IntS12 and IntS9. Interaction with IntS12 is likely to be important for promoting 3'-end processing of snRNAs. Interacts with Mediator complex members Cdk8 and CycC.

The protein resides in the nucleus membrane. Its subcellular location is the nucleus. Component of the integrator complex, a multiprotein complex that terminates RNA polymerase II (Pol II) transcription in the promoter-proximal region of genes. The integrator complex provides a quality checkpoint during transcription elongation by driving premature transcription termination of transcripts that are unfavorably configured for transcriptional elongation: the complex terminates transcription by (1) catalyzing dephosphorylation of the C-terminal domain (CTD) of Pol II subunit Polr2A/Rbp1 and Spt5, and (2) degrading the exiting nascent RNA transcript via endonuclease activity. The integrator complex is also involved in the 3'-end processing of the U7 snRNA, and also the spliceosomal snRNAs U1, U2, U4 and U5. Required for the normal expression of the Integrator complex component IntS12. This Drosophila melanogaster (Fruit fly) protein is Integrator complex subunit 1.